Consider the following 476-residue polypeptide: tRNA(Ile)-lysidine synthase (476 aa).

30–35 (SGGPDS) is a binding site for ATP.

It belongs to the tRNA(Ile)-lysidine synthase family.

It is found in the cytoplasm. It carries out the reaction cytidine(34) in tRNA(Ile2) + L-lysine + ATP = lysidine(34) in tRNA(Ile2) + AMP + diphosphate + H(+). Functionally, ligates lysine onto the cytidine present at position 34 of the AUA codon-specific tRNA(Ile) that contains the anticodon CAU, in an ATP-dependent manner. Cytidine is converted to lysidine, thus changing the amino acid specificity of the tRNA from methionine to isoleucine. This Bacillus anthracis protein is tRNA(Ile)-lysidine synthase.